Reading from the N-terminus, the 461-residue chain is Ufm1-specific protease 2 (461 aa).

Active-site residues include Cys294, Asp418, and His420.

Belongs to the peptidase C78 family.

It localises to the endoplasmic reticulum. It is found in the cytoplasm. The protein resides in the nucleus. Its function is as follows. Thiol-dependent isopeptidase that specifically cleaves UFM1, a ubiquitin-like modifier protein, from conjugated proteins, such as CD274/PD-L1, CYB5R3, DDRGK1, MRE11, RPL26/uL24, TRIP4 and RPL26/uL24. While it is also able to mediate the processing of UFM1 precursors, a prerequisite for conjugation reactions, UFSP2 mainly acts as a protein deUFMylase that mediates deconjugation of UFM1 from target proteins. Mediates deUFMylation of RPL26/uL24, a critical step to release the UFM1 ribosome E3 ligase (UREL) complex during the recycling of 60S ribosome subunits from the endoplasmic reticulum. Catalyzes deUFMylation of TRIP4, regulating intracellular nuclear receptors transactivation and thereby regulate cell proliferation and differentiation. This is Ufm1-specific protease 2 from Rattus norvegicus (Rat).